Here is a 78-residue protein sequence, read N- to C-terminus: Short neurotoxin OH-5 (78 aa).

The signal sequence occupies residues 1–21 (MKNLLLTFLVVTIVCLDLGYT). Cystine bridges form between Cys24–Cys40, Cys33–Cys58, Cys62–Cys70, and Cys71–Cys76.

It belongs to the three-finger toxin family. Short-chain subfamily. In terms of tissue distribution, expressed by the venom gland.

It localises to the secreted. Functionally, this three-finger toxin binds and inhibits the nicotinic acetylcholine receptor (nAChR). In Ophiophagus hannah (King cobra), this protein is Short neurotoxin OH-5.